The sequence spans 124 residues: Large ribosomal subunit protein bL19 (124 aa).

This sequence belongs to the bacterial ribosomal protein bL19 family.

Its function is as follows. This protein is located at the 30S-50S ribosomal subunit interface and may play a role in the structure and function of the aminoacyl-tRNA binding site. This Orientia tsutsugamushi (strain Ikeda) (Rickettsia tsutsugamushi) protein is Large ribosomal subunit protein bL19.